The sequence spans 1035 residues: MGSFLSKLELSPSSPAQVRTDLPERPTKRRPPQPLHQVHRVQFVHRAHPAPRYRPVRRRPNLDPANPTTWLANEAWRRFPMKKSQNSPLGPLPSDWWESYLKRTIWSLRHPRPIWSPVTIRITPPDQRVPPSTSPEDVIALAGLPPSEELADPCSKETVLRALRECRKGKGRLEEPLFPESLDSKRRSPETRPSAFKPLMKNGTLTSFVPRPGPLKRSLHSWGSDHSLTKRPNCSSMSSLASIYRGGTLSSKRNAIGSSYSSCRNFSDPWKRSVPSVSFETPEWPIKKEKSCHRPSSPVPLVSDFESLGGSESSGQQNQKIPQLPSSPENLVSEIPPPQLGYAVSDENLTLGKKAELQVSNNAGEDTTEVNTDPFPETWLAIQPSLSLALPSSETDLTQGANPQLENLRKMQKSLGPLASPQSTGEATSVAHSPLKTPSLPTPPGCSQSELLPGTSPDSKPTATFILLTPTSPTLPVTDTTWPPSTSQADRSPMPPDPPAPPTIQSTLLGMVSSPTSHLSASAPPDATSAHLMLKPILGPLHNSEIGSSSYSRISVTAAASSISSLSTIQGTLTPTFKPIFGSIDPLKTTPMIAPFSSKQTPPPFTHASTHHFHGLVKATSVVMSTTLASTSKDSVFKPPLDFGVVNVTSAVGNTYSVPSTCDTFLLGTAQAFRADFTPATGFIFPPHHHPTIPTVHTVTMFTQVLSSVVQISPRSSTANFRGMGSPLPASALVSTNWLASTPSISNLTPAITSPLGSSSRPPFPLSQGANPQPAFGATNGQKQGPSQPALMPSVSSSFLFGSSAVALPTPMPTPAQPAFISTTQSALGCLTPSASTSQTPASTWSGIGGIPAGFPISQASTTGFRIVIQTHQSGAFGSVFGSRAPQPFTFGGFVTPMDCDESGIIMTGPDMSPTSGAFSIGALPSGTTNTMIPFGKGWSQNTEGLPSHRTAFSLGRGSISARKTMAPIAQNTPVPGQAKAGSSVGFGMPFPPAQGSVGRGPFRSSASSFSIGAKSKTPKNREKGHSRRHHAYKK.

Disordered regions lie at residues 1–37, 177–213, 286–343, 415–508, 754–791, and 972–1035; these read MGSF…PLHQ, LFPE…PRPG, IKKE…LGYA, LGPL…QSTL, SPLG…QPAL, and NTPV…AYKK. Positions 27–37 are enriched in basic residues; it reads TKRRPPQPLHQ. Residues 309–319 are compositionally biased toward low complexity; the sequence is GGSESSGQQNQ. Composition is skewed to polar residues over residues 320 to 330, 420 to 431, and 445 to 462; these read KIPQLPSSPEN, SPQSTGEATSVA, and GCSQ…SKPT. A compositionally biased stretch (low complexity) spans 464-481; sequence TFILLTPTSPTLPVTDTT. The span at 493 to 502 shows a compositional bias: pro residues; sequence PMPPDPPAPP. Residues 1000–1016 are compositionally biased toward low complexity; sequence RGPFRSSASSFSIGAKS. Over residues 1017 to 1035 the composition is skewed to basic residues; sequence KTPKNREKGHSRRHHAYKK.

The protein belongs to the POM121 family.

In Homo sapiens (Human), this protein is POM121-like protein 2 (POM121L2).